The chain runs to 176 residues: NAD(P)H-quinone oxidoreductase subunit 6, chloroplastic (176 aa).

5 helical membrane-spanning segments follow: residues 10–30, 33–53, 61–81, 92–112, and 153–173; these read FLLVFLELGLILGSLGVVFLP, IYSAFSLGLVLFCISLFYILL, AQLLIYVGAINVLIIFAVMFM, LWTVGDGVTSMVCTSLFISLI, and FLPFELISIILLVALIGAIAI.

This sequence belongs to the complex I subunit 6 family. NDH is composed of at least 16 different subunits, 5 of which are encoded in the nucleus.

It is found in the plastid. Its subcellular location is the chloroplast thylakoid membrane. It catalyses the reaction a plastoquinone + NADH + (n+1) H(+)(in) = a plastoquinol + NAD(+) + n H(+)(out). The catalysed reaction is a plastoquinone + NADPH + (n+1) H(+)(in) = a plastoquinol + NADP(+) + n H(+)(out). Its function is as follows. NDH shuttles electrons from NAD(P)H:plastoquinone, via FMN and iron-sulfur (Fe-S) centers, to quinones in the photosynthetic chain and possibly in a chloroplast respiratory chain. The immediate electron acceptor for the enzyme in this species is believed to be plastoquinone. Couples the redox reaction to proton translocation, and thus conserves the redox energy in a proton gradient. The sequence is that of NAD(P)H-quinone oxidoreductase subunit 6, chloroplastic (ndhG) from Jasminum nudiflorum (Winter jasmine).